Reading from the N-terminus, the 800-residue chain is Nuclear cap-binding protein subunit 1 (800 aa).

The tract at residues 1–26 (MSRRRAHDTEDEGYDHRRNKRRRVSE) is disordered. Phosphothreonine is present on threonine 9. Positions 31 to 243 (EDRLESLILR…CLWAQIRKLR (213 aa)) constitute an MIF4G domain. The tract at residues 669–700 (LAKADSSSSDSEDDSSHKRKKPITHADKPSEE) is disordered.

The protein belongs to the NCBP1 family. In terms of assembly, component of the nuclear cap-binding complex (CBC), a heterodimer composed of Cbp80 and Cbp20 that interacts with m7GpppG-capped RNA.

Its subcellular location is the nucleus. Component of the cap-binding complex (CBC), which binds cotranscriptionally to the 5'-cap of pre-mRNAs and is involved in various processes such as pre-mRNA splicing and RNA-mediated gene silencing (RNAi). The CBC complex is involved in miRNA-mediated RNA interference via its interaction with Ars2 and is required for primary microRNAs (miRNAs) processing. Also involved in innate immunity via the short interfering RNAs (siRNAs) processing machinery by restricting the viral RNA production. In the CBC complex, Cbp80 does not bind directly capped RNAs (m7GpppG-capped RNA) but is required to stabilize the movement of the N-terminal loop of Cbp20 and lock the CBC into a high affinity cap-binding state with the cap structure. This is Nuclear cap-binding protein subunit 1 (Cbp80) from Drosophila melanogaster (Fruit fly).